The chain runs to 949 residues: Glycine dehydrogenase (decarboxylating) (949 aa).

K700 carries the post-translational modification N6-(pyridoxal phosphate)lysine.

This sequence belongs to the GcvP family. In terms of assembly, the glycine cleavage system is composed of four proteins: P, T, L and H. It depends on pyridoxal 5'-phosphate as a cofactor.

It catalyses the reaction N(6)-[(R)-lipoyl]-L-lysyl-[glycine-cleavage complex H protein] + glycine + H(+) = N(6)-[(R)-S(8)-aminomethyldihydrolipoyl]-L-lysyl-[glycine-cleavage complex H protein] + CO2. Functionally, the glycine cleavage system catalyzes the degradation of glycine. The P protein binds the alpha-amino group of glycine through its pyridoxal phosphate cofactor; CO(2) is released and the remaining methylamine moiety is then transferred to the lipoamide cofactor of the H protein. The chain is Glycine dehydrogenase (decarboxylating) from Christiangramia forsetii (strain DSM 17595 / CGMCC 1.15422 / KT0803) (Gramella forsetii).